A 249-amino-acid polypeptide reads, in one-letter code: MDGKKCSVWMFLPLVFTLFTSAGLWIVYFIAVEDDKILPLNSAARKSGVKHAPYISFAGDDPPASCVFSQVMNMAAFLALVVAVLRFIQLKPKVLNPWLNISGLVALCLASFGMTLLGNFQLTNDEEIHNVGTSLTFGFGTLTCWIQAALTLKVNIKNEGRRAGIPRVILSAVITLCVVLYFILMAQDIHMYAARVQWGLVMCFLAYFGTLAVEFRHYRYEIVCSEYQENFLSFSESLSEASEYQTDQV.

Over 1 to 9 (MDGKKCSVW) the chain is Cytoplasmic. The chain crosses the membrane as a helical span at residues 10 to 30 (MFLPLVFTLFTSAGLWIVYFI). The Extracellular portion of the chain corresponds to 31 to 64 (AVEDDKILPLNSAARKSGVKHAPYISFAGDDPPA). The chain crosses the membrane as a helical span at residues 65–85 (SCVFSQVMNMAAFLALVVAVL). Over 86-97 (RFIQLKPKVLNP) the chain is Cytoplasmic. A helical transmembrane segment spans residues 98–118 (WLNISGLVALCLASFGMTLLG). Residues 119–130 (NFQLTNDEEIHN) lie on the Extracellular side of the membrane. Residues 131–151 (VGTSLTFGFGTLTCWIQAALT) traverse the membrane as a helical segment. At 152–168 (LKVNIKNEGRRAGIPRV) the chain is on the cytoplasmic side. A helical membrane pass occupies residues 169-189 (ILSAVITLCVVLYFILMAQDI). Over 190-192 (HMY) the chain is Extracellular. The chain crosses the membrane as a helical span at residues 193-213 (AARVQWGLVMCFLAYFGTLAV). Residues 214–249 (EFRHYRYEIVCSEYQENFLSFSESLSEASEYQTDQV) lie on the Cytoplasmic side of the membrane.

The protein belongs to the DRAM/TMEM150 family.

Its subcellular location is the cell membrane. The protein localises to the lysosome membrane. The enzyme catalyses Ca(2+)(in) = Ca(2+)(out). The catalysed reaction is Na(+)(in) = Na(+)(out). It catalyses the reaction K(+)(in) = K(+)(out). It carries out the reaction Mg(2+)(in) = Mg(2+)(out). In terms of biological role, nonselective cationic channel with high permeability to Ca(2+). Component of a mechanosensitive cation channel. Confers mechanically activated (MA) currents with slow inactivation kinetics. May contribute to proprioception. The sequence is that of Transmembrane protein 150C (Tmem150c) from Rattus norvegicus (Rat).